Here is a 349-residue protein sequence, read N- to C-terminus: Homeobox-leucine zipper protein HOX5 (349 aa).

Residues 83-142 (APEKKRRLTAEQVQMLERSFEEENKLEPERKTELARRLGMAPRQVAVWFQNRRARWKTKQ) constitute a DNA-binding region (homeobox). The segment at 141 to 185 (KQLEHDFDRLKAAYDALAADHHALLSDNDRLRAQVISLTEKLQDK) is leucine-zipper. The tract at residues 181–253 (KLQDKETSPS…GTNDDGDGGA (73 aa)) is disordered. A compositionally biased stretch (low complexity) spans 188 to 198 (SPSSATITTAA).

This sequence belongs to the HD-ZIP homeobox family. Class I subfamily. In terms of assembly, homodimer. May form a heterodimer with HOX4. As to expression, expressed in seedlings, roots, leaves, nodes, internodes, flowers and embryo.

It is found in the nucleus. Functionally, probable transcription activator that binds to the DNA sequence 5'-CAAT[AT]ATTG-3'. The protein is Homeobox-leucine zipper protein HOX5 (HOX5) of Oryza sativa subsp. japonica (Rice).